The chain runs to 214 residues: MAGGRNGVKFVEMDIRSREAYELAEEWFDDVVFSYEIPPGVLDKERLKEIKKEYGNVAITLINPKPSLVKEAVQRFKQNYLIYVESSDLRVVRYSIERGVDAVISPWANRKDQGIDHVLARMMNKRGVALGFSLRPLLHQNPYERANALKFMRKAWTLVNKYKVPRFISSSAKGKFQVRGVKELISLGIAIGMEEVQAKASLSFYPLGILERLK.

This sequence belongs to the eukaryotic/archaeal RNase P protein component 3 family. Consists of a catalytic RNA component and at least 4-5 protein subunits. Forms a subcomplex with Rnp2 which stimulates the catalytic RNA.

It localises to the cytoplasm. The enzyme catalyses Endonucleolytic cleavage of RNA, removing 5'-extranucleotides from tRNA precursor.. Functionally, part of ribonuclease P, a protein complex that generates mature tRNA molecules by cleaving their 5'-ends. The RNA is catalytic, but its KM for pre-tRNA is 170-fold decreased in the presence of the 4 known protein subunits (Rnp1-4). The protein subunits also decrease the amount of Mg(2+) needed for activity. The chain is Ribonuclease P protein component 3 from Pyrococcus furiosus (strain ATCC 43587 / DSM 3638 / JCM 8422 / Vc1).